A 151-amino-acid chain; its full sequence is UPF0178 protein Ping_0754 (151 aa).

This sequence belongs to the UPF0178 family.

This Psychromonas ingrahamii (strain DSM 17664 / CCUG 51855 / 37) protein is UPF0178 protein Ping_0754.